Reading from the N-terminus, the 259-residue chain is Acyl-[acyl-carrier-protein]--UDP-N-acetylglucosamine O-acyltransferase (259 aa).

This sequence belongs to the transferase hexapeptide repeat family. LpxA subfamily. Homotrimer.

It localises to the cytoplasm. The enzyme catalyses a (3R)-hydroxyacyl-[ACP] + UDP-N-acetyl-alpha-D-glucosamine = a UDP-3-O-[(3R)-3-hydroxyacyl]-N-acetyl-alpha-D-glucosamine + holo-[ACP]. It participates in glycolipid biosynthesis; lipid IV(A) biosynthesis; lipid IV(A) from (3R)-3-hydroxytetradecanoyl-[acyl-carrier-protein] and UDP-N-acetyl-alpha-D-glucosamine: step 1/6. Its function is as follows. Involved in the biosynthesis of lipid A, a phosphorylated glycolipid that anchors the lipopolysaccharide to the outer membrane of the cell. In Psychrobacter cryohalolentis (strain ATCC BAA-1226 / DSM 17306 / VKM B-2378 / K5), this protein is Acyl-[acyl-carrier-protein]--UDP-N-acetylglucosamine O-acyltransferase.